A 769-amino-acid chain; its full sequence is Bifunctional glycosyltransferase pgtA (769 aa).

Residues 25–210 (YQGINNLIIS…SVIFKRSIFT (186 aa)) form an N-acetylgalactosamine 3-beta-galactosyltransferase region. Over residues 410–441 (NNINNNNNNNNNNNNNNNNNNNNNNNNNNNNN) the composition is skewed to low complexity. A disordered region spans residues 410–442 (NNINNNNNNNNNNNNNNNNNNNNNNNNNNNNNS). The segment at 442–769 (SILNFISGIN…SVHIGELFIS (328 aa)) is alpha-1,2-fucosyltransferase.

This sequence belongs to the glycosyltransferase 2 family.

It carries out the reaction an N-acetyl-beta-D-glucosaminyl derivative + UDP-alpha-D-galactose = a beta-D-galactosyl-(1-&gt;3)-N-acetyl-beta-D-glucosaminyl derivative + UDP + H(+). It catalyses the reaction a beta-D-galactosyl-(1-&gt;3)-N-acetyl-beta-D-glucosaminyl derivative + GDP-beta-L-fucose = an alpha-L-Fuc-(1-&gt;2)-beta-D-Gal-(1-&gt;3)-beta-D-GlcNAc derivative + GDP + H(+). Its function is as follows. Bifunctional protein composed of 2 glycosyltransferase domains involved in glycosylating skp1. The N-terminal part catalyzes the transfer of a galactose residue to GlcNAc-skp1 in a beta 1-3 linkage. The C-terminal part catalyzes the transfer of a fucose residue to Gal-GlcNAc-skp1 in an alpha 1-2 linkage. The polypeptide is Bifunctional glycosyltransferase pgtA (pgtA) (Dictyostelium discoideum (Social amoeba)).